Consider the following 468-residue polypeptide: GTPase Der (468 aa).

EngA-type G domains lie at 3–169 (PVMA…SPPD) and 199–372 (IRLA…KAAT). Residues 9–16 (GRANVGKS), 56–60 (DTGGF), 119–122 (NKAE), 205–212 (GRPNVGKS), 252–256 (DTAGL), and 317–320 (NKWD) each bind GTP. In terms of domain architecture, KH-like spans 373–457 (CKMSTPVLTR…PLRIELKTSH (85 aa)).

It belongs to the TRAFAC class TrmE-Era-EngA-EngB-Septin-like GTPase superfamily. EngA (Der) GTPase family. In terms of assembly, associates with the 50S ribosomal subunit.

Its function is as follows. GTPase that plays an essential role in the late steps of ribosome biogenesis. The protein is GTPase Der of Verminephrobacter eiseniae (strain EF01-2).